The following is a 563-amino-acid chain: NAD(P)H-quinone oxidoreductase chain 4 (563 aa).

15 consecutive transmembrane segments (helical) span residues 25-45 (FPWL…VPFI), 56-76 (WFAL…YLYG), 90-110 (VSWL…ISMP), 111-131 (LILL…PVTF), 133-153 (PKLF…VFAV), 157-177 (LLFF…LAIW), 189-209 (FIIY…AMGF), 230-250 (GFQL…LPIV), 264-284 (TAPV…YALM), 298-318 (FAPL…LTSF), 335-355 (MGFV…GAML), 356-376 (QMIS…ATYD), 397-417 (FALW…SGFV), 438-458 (IVIA…LLSM), and 485-505 (VYII…PRLM).

The protein belongs to the complex I subunit 4 family.

Its subcellular location is the cellular thylakoid membrane. The catalysed reaction is a plastoquinone + NADH + (n+1) H(+)(in) = a plastoquinol + NAD(+) + n H(+)(out). The enzyme catalyses a plastoquinone + NADPH + (n+1) H(+)(in) = a plastoquinol + NADP(+) + n H(+)(out). Its function is as follows. NDH-1 shuttles electrons from NAD(P)H, via FMN and iron-sulfur (Fe-S) centers, to quinones in the respiratory chain. The immediate electron acceptor for the enzyme in this species is believed to be plastoquinone. Couples the redox reaction to proton translocation (for every two electrons transferred, four hydrogen ions are translocated across the cytoplasmic membrane), and thus conserves the redox energy in a proton gradient. The chain is NAD(P)H-quinone oxidoreductase chain 4 from Prochlorococcus marinus (strain MIT 9303).